Reading from the N-terminus, the 551-residue chain is Cytochrome c lysine N-methyltransferase 1 (551 aa).

Residues 46-273 form the SET domain; it reads DKIELLRVSS…PNTEVLITYK (228 aa). The segment at 184–288 is SET-like; the sequence is IELLRQIYSA…LAMITKYGFD (105 aa).

The protein belongs to the class V-like SAM-binding methyltransferase superfamily.

It localises to the cytoplasm. It is found in the cytosol. The catalysed reaction is L-lysyl-[cytochrome c] + S-adenosyl-L-methionine = N(6)-methyl-L-lysyl-[cytochrome c] + S-adenosyl-L-homocysteine + H(+). Functionally, methyltransferase which mediates trimethylation of cytochrome c (CYC1). The sequence is that of Cytochrome c lysine N-methyltransferase 1 (CTM1) from Candida glabrata (strain ATCC 2001 / BCRC 20586 / JCM 3761 / NBRC 0622 / NRRL Y-65 / CBS 138) (Yeast).